The sequence spans 415 residues: Mitogen-activated protein kinase kinae MST7 (415 aa).

The disordered stretch occupies residues 1–37; the sequence is MADPFAPRTMKRRNVKGLALTPAAPKPPPTAENAPIH. The Protein kinase domain occupies 61-326; that stretch reads LEVIKDLGSG…EELFERDPFV (266 aa). ATP is bound by residues 67 to 75 and Lys-90; that span reads LGSGNGGTV. Positions 363-409 are disordered; sequence DLLRSSDSPTATYHGDDRPLETPTSAYRVDPRRGPAEGSAGLADQVD.

It belongs to the protein kinase superfamily. STE Ser/Thr protein kinase family. MAP kinase kinase subfamily. In terms of assembly, homodimer. Interacts with the adapter protein MST50. Interacts with TRX2.

It catalyses the reaction L-seryl-[protein] + ATP = O-phospho-L-seryl-[protein] + ADP + H(+). The catalysed reaction is L-threonyl-[protein] + ATP = O-phospho-L-threonyl-[protein] + ADP + H(+). Its function is as follows. Mitogen-activated protein kinase kinase; part of the MST11-MST7-PMK1 MAP kinase (MAPK) cascade that is essential for appressorium formation, penetration and invasive growth. The MST11-MST7-PMK1 MAP kinase cascade transduces signals from the cell surface sensors MDB2 and SHO1 that recognize various surface signals such as surface hydrophobicity, cutin monomers, and rice leaf waxes. MST7 acts as the upstream MAPKK that directly phosphorylates MAP kinase PMK1. This Pyricularia oryzae (strain 70-15 / ATCC MYA-4617 / FGSC 8958) (Rice blast fungus) protein is Mitogen-activated protein kinase kinae MST7.